A 114-amino-acid chain; its full sequence is DNA-directed RNA polymerase subunit Rpo4 (114 aa).

This sequence belongs to the eukaryotic RPB4 RNA polymerase subunit family. As to quaternary structure, part of the 13-subunit RNA polymerase complex. Forms a stalk with Rpo7 that extends from the main structure. Post-translationally, in purified enzyme appears as 5 forms, each differing by about 200 Da of a covalently bound, negatively charged residue. Not glycosylated.

Its subcellular location is the cytoplasm. The enzyme catalyses RNA(n) + a ribonucleoside 5'-triphosphate = RNA(n+1) + diphosphate. In terms of biological role, DNA-dependent RNA polymerase catalyzes the transcription of DNA into RNA using the four ribonucleoside triphosphates as substrates. This subunit is less well bound than the others. Probably not involved in transcription initiation. In Sulfolobus acidocaldarius (strain ATCC 33909 / DSM 639 / JCM 8929 / NBRC 15157 / NCIMB 11770), this protein is DNA-directed RNA polymerase subunit Rpo4.